The following is a 227-amino-acid chain: UPF0758 protein lpl2409 (227 aa).

Positions 102–225 (RLSNTQQTYA…YSIFAENKWA (124 aa)) constitute an MPN domain. 3 residues coordinate Zn(2+): His-173, His-175, and Asp-186. The JAMM motif motif lies at 173-186 (HNHPSGLSDASQQD).

This sequence belongs to the UPF0758 family.

The polypeptide is UPF0758 protein lpl2409 (Legionella pneumophila (strain Lens)).